The following is a 155-amino-acid chain: Putative pre-16S rRNA nuclease (155 aa).

It belongs to the YqgF nuclease family.

It is found in the cytoplasm. Could be a nuclease involved in processing of the 5'-end of pre-16S rRNA. The polypeptide is Putative pre-16S rRNA nuclease (Wolbachia sp. subsp. Drosophila simulans (strain wRi)).